The following is a 30-amino-acid chain: Cyclotide hypa-A (30 aa).

Residues glycine 1–asparagine 30 constitute a cross-link (cyclopeptide (Gly-Asn)). 3 cysteine pairs are disulfide-bonded: cysteine 4–cysteine 21, cysteine 8–cysteine 23, and cysteine 13–cysteine 28.

Post-translationally, this is a cyclic peptide.

In terms of biological role, probably participates in a plant defense mechanism. The chain is Cyclotide hypa-A from Pombalia parviflora (Violetilla).